A 593-amino-acid polypeptide reads, in one-letter code: Proteasome-associated ATPase (593 aa).

Positions 5 to 94 form a coiled coil; the sequence is DDADSRAARW…KEEIDRLAQP (90 aa). ATP is bound at residue 281–286; the sequence is GCGKTL. A disordered region spans residues 574–593; that stretch reads GKGADAGRSIETASNTGQYL. The span at 584–593 shows a compositional bias: polar residues; sequence ETASNTGQYL. A docks into pockets in the proteasome alpha-ring region spans residues 592–593; sequence YL.

Belongs to the AAA ATPase family. As to quaternary structure, homohexamer. Assembles into a hexameric ring structure that caps the 20S proteasome core. Strongly interacts with the prokaryotic ubiquitin-like protein Pup through a hydrophobic interface; the interacting region of ARC lies in its N-terminal coiled-coil domain. There is one Pup binding site per ARC hexamer ring. Upon ATP-binding, the C-terminus of ARC interacts with the alpha-rings of the proteasome core, possibly by binding to the intersubunit pockets.

It participates in protein degradation; proteasomal Pup-dependent pathway. Functionally, ATPase which is responsible for recognizing, binding, unfolding and translocation of pupylated proteins into the bacterial 20S proteasome core particle. May be essential for opening the gate of the 20S proteasome via an interaction with its C-terminus, thereby allowing substrate entry and access to the site of proteolysis. Thus, the C-termini of the proteasomal ATPase may function like a 'key in a lock' to induce gate opening and therefore regulate proteolysis. This Salinispora tropica (strain ATCC BAA-916 / DSM 44818 / JCM 13857 / NBRC 105044 / CNB-440) protein is Proteasome-associated ATPase.